The following is a 146-amino-acid chain: Large ribosomal subunit protein uL15 (146 aa).

A disordered region spans residues 1–56 (MSDIQLNTLKPAEGSKHAKRRVGRGIGSGLGKTAGRGHKGQKSRSGGFHKVGFEGG). The span at 24 to 34 (RGIGSGLGKTA) shows a compositional bias: gly residues.

The protein belongs to the universal ribosomal protein uL15 family. In terms of assembly, part of the 50S ribosomal subunit.

In terms of biological role, binds to the 23S rRNA. The chain is Large ribosomal subunit protein uL15 from Bordetella bronchiseptica (strain ATCC BAA-588 / NCTC 13252 / RB50) (Alcaligenes bronchisepticus).